Reading from the N-terminus, the 341-residue chain is Acetylpolyamine amidohydrolase (341 aa).

His-157 functions as the Proton donor/acceptor in the catalytic mechanism. Zn(2+) contacts are provided by Asp-192, His-194, and Asp-281.

The protein belongs to the histone deacetylase family. As to quaternary structure, homodimer. Zn(2+) serves as cofactor.

It carries out the reaction N-acetylputrescine + H2O = putrescine + acetate. It catalyses the reaction N-acetylcadaverine + H2O = cadaverine + acetate. It functions in the pathway amine and polyamine metabolism. Its function is as follows. Involved in polyamine metabolism. Catalyzes the deacetylation of various acetylated polyamines such as N-acetylputrescine and N-acetylcadaverine. In Burkholderia pseudomallei (strain 1710b), this protein is Acetylpolyamine amidohydrolase.